The sequence spans 274 residues: Ribosomal RNA small subunit methyltransferase A (274 aa).

6 residues coordinate S-adenosyl-L-methionine: N27, L29, G54, E75, D100, and N121.

This sequence belongs to the class I-like SAM-binding methyltransferase superfamily. rRNA adenine N(6)-methyltransferase family. RsmA subfamily.

The protein resides in the cytoplasm. The catalysed reaction is adenosine(1518)/adenosine(1519) in 16S rRNA + 4 S-adenosyl-L-methionine = N(6)-dimethyladenosine(1518)/N(6)-dimethyladenosine(1519) in 16S rRNA + 4 S-adenosyl-L-homocysteine + 4 H(+). Functionally, specifically dimethylates two adjacent adenosines (A1518 and A1519) in the loop of a conserved hairpin near the 3'-end of 16S rRNA in the 30S particle. May play a critical role in biogenesis of 30S subunits. In Acinetobacter baylyi (strain ATCC 33305 / BD413 / ADP1), this protein is Ribosomal RNA small subunit methyltransferase A.